A 717-amino-acid polypeptide reads, in one-letter code: Copine family protein 5 (717 aa).

The C2 domain maps to 193 to 318; sequence YLGGIIVSAE…KYGPGSDNVY (126 aa). The VWFA domain maps to 377–567; that stretch reads ELDQRRFDGE…LNKSRIAETA (191 aa).

The protein belongs to the copine family.

The protein is Copine family protein 5 (cpna-5) of Caenorhabditis elegans.